Here is a 475-residue protein sequence, read N- to C-terminus: Ribulose bisphosphate carboxylase large chain (475 aa).

Positions 1-2 (MS) are excised as a propeptide. An N-acetylproline modification is found at proline 3. Residue lysine 14 is modified to N6,N6,N6-trimethyllysine. Positions 123 and 173 each coordinate substrate. The active-site Proton acceptor is lysine 175. Lysine 177 contacts substrate. Positions 201, 203, and 204 each coordinate Mg(2+). Lysine 201 bears the N6-carboxylysine mark. Histidine 294 functions as the Proton acceptor in the catalytic mechanism. Residues arginine 295, histidine 327, and serine 379 each contribute to the substrate site.

The protein belongs to the RuBisCO large chain family. Type I subfamily. Heterohexadecamer of 8 large chains and 8 small chains; disulfide-linked. The disulfide link is formed within the large subunit homodimers. Mg(2+) is required as a cofactor. The disulfide bond which can form in the large chain dimeric partners within the hexadecamer appears to be associated with oxidative stress and protein turnover.

The protein resides in the plastid. It is found in the chloroplast. The enzyme catalyses 2 (2R)-3-phosphoglycerate + 2 H(+) = D-ribulose 1,5-bisphosphate + CO2 + H2O. It carries out the reaction D-ribulose 1,5-bisphosphate + O2 = 2-phosphoglycolate + (2R)-3-phosphoglycerate + 2 H(+). In terms of biological role, ruBisCO catalyzes two reactions: the carboxylation of D-ribulose 1,5-bisphosphate, the primary event in carbon dioxide fixation, as well as the oxidative fragmentation of the pentose substrate in the photorespiration process. Both reactions occur simultaneously and in competition at the same active site. This is Ribulose bisphosphate carboxylase large chain from Piper cenocladum (Ant piper).